The primary structure comprises 132 residues: uncharacterized protein (132 aa).

A signal peptide spans 1–25; it reads MRFTKVVGFLSVLGLAAVFPLTAQA.

This is an uncharacterized protein from Bacillus subtilis (strain 168).